The primary structure comprises 392 residues: S-adenosylmethionine synthase (392 aa).

His17 serves as a coordination point for ATP. Asp19 serves as a coordination point for Mg(2+). A K(+)-binding site is contributed by Glu45. L-methionine-binding residues include Glu58 and Gln102. The segment at 102 to 112 (QSADIAQGVDA) is flexible loop. ATP contacts are provided by residues 169-171 (DAK), 235-236 (KF), Asp244, 250-251 (RK), Ala267, and Lys271. L-methionine is bound at residue Asp244. Lys275 is an L-methionine binding site.

Belongs to the AdoMet synthase family. Homotetramer; dimer of dimers. The cofactor is Mg(2+). Requires K(+) as cofactor.

The protein resides in the cytoplasm. It catalyses the reaction L-methionine + ATP + H2O = S-adenosyl-L-methionine + phosphate + diphosphate. It participates in amino-acid biosynthesis; S-adenosyl-L-methionine biosynthesis; S-adenosyl-L-methionine from L-methionine: step 1/1. Catalyzes the formation of S-adenosylmethionine (AdoMet) from methionine and ATP. The overall synthetic reaction is composed of two sequential steps, AdoMet formation and the subsequent tripolyphosphate hydrolysis which occurs prior to release of AdoMet from the enzyme. The polypeptide is S-adenosylmethionine synthase (Methylobacterium radiotolerans (strain ATCC 27329 / DSM 1819 / JCM 2831 / NBRC 15690 / NCIMB 10815 / 0-1)).